The chain runs to 649 residues: Macrolide export ATP-binding/permease protein MacB 1 (649 aa).

The ABC transporter domain occupies 5–243 (LELEGIRRSY…AAAELMSLTP (239 aa)). Position 41–48 (41–48 (GASGSGKS)) interacts with ATP. 5 consecutive transmembrane segments (helical) span residues 274-294 (ALTM…LVVG), 420-440 (VVGQ…VVAE), 524-544 (LFLT…VMNI), 578-598 (VLVC…IGLI), and 608-628 (IAFP…IGVV).

Belongs to the ABC transporter superfamily. Macrolide exporter (TC 3.A.1.122) family. As to quaternary structure, homodimer. Part of the tripartite efflux system MacAB-TolC, which is composed of an inner membrane transporter, MacB, a periplasmic membrane fusion protein, MacA, and an outer membrane component, TolC. The complex forms a large protein conduit and can translocate molecules across both the inner and outer membranes. Interacts with MacA.

The protein localises to the cell inner membrane. Functionally, part of the tripartite efflux system MacAB-TolC. MacB is a non-canonical ABC transporter that contains transmembrane domains (TMD), which form a pore in the inner membrane, and an ATP-binding domain (NBD), which is responsible for energy generation. Confers resistance against macrolides. This chain is Macrolide export ATP-binding/permease protein MacB 1, found in Yersinia pestis bv. Antiqua (strain Antiqua).